A 211-amino-acid chain; its full sequence is Thymidylate kinase (211 aa).

11 to 18 (GPDGAGKT) contacts ATP.

This sequence belongs to the thymidylate kinase family.

It catalyses the reaction dTMP + ATP = dTDP + ADP. Its function is as follows. Phosphorylation of dTMP to form dTDP in both de novo and salvage pathways of dTTP synthesis. This Streptococcus pyogenes serotype M1 protein is Thymidylate kinase.